Consider the following 45-residue polypeptide: uncharacterized protein (45 aa).

It belongs to the asfivirus C62L family.

This is an uncharacterized protein from Ornithodoros (relapsing fever ticks).